The primary structure comprises 765 residues: 5-methyltetrahydropteroyltriglutamate--homocysteine methyltransferase (765 aa).

5-methyltetrahydropteroyltri-L-glutamate contacts are provided by residues 16 to 19 (RELK) and Lys-121. Residues 441–443 (IGS) and Glu-494 each bind L-homocysteine. L-methionine contacts are provided by residues 441 to 443 (IGS) and Glu-494. Residues 525 to 526 (RC) and Trp-571 each bind 5-methyltetrahydropteroyltri-L-glutamate. Asp-609 lines the L-homocysteine pocket. Asp-609 serves as a coordination point for L-methionine. Glu-615 provides a ligand contact to 5-methyltetrahydropteroyltri-L-glutamate. Residues His-651, Cys-653, and Glu-675 each contribute to the Zn(2+) site. His-704 serves as the catalytic Proton donor. Residue Cys-736 coordinates Zn(2+).

It belongs to the vitamin-B12 independent methionine synthase family. Zn(2+) is required as a cofactor.

It carries out the reaction 5-methyltetrahydropteroyltri-L-glutamate + L-homocysteine = tetrahydropteroyltri-L-glutamate + L-methionine. It participates in amino-acid biosynthesis; L-methionine biosynthesis via de novo pathway; L-methionine from L-homocysteine (MetE route): step 1/1. Functionally, catalyzes the transfer of a methyl group from 5-methyltetrahydrofolate to homocysteine resulting in methionine formation. This is 5-methyltetrahydropteroyltriglutamate--homocysteine methyltransferase from Saccharophagus degradans (strain 2-40 / ATCC 43961 / DSM 17024).